A 92-amino-acid chain; its full sequence is Small ribosomal subunit protein uS19 (92 aa).

The protein belongs to the universal ribosomal protein uS19 family.

Its function is as follows. Protein S19 forms a complex with S13 that binds strongly to the 16S ribosomal RNA. This is Small ribosomal subunit protein uS19 from Legionella pneumophila (strain Paris).